The sequence spans 247 residues: 5-hydroxytryptamine receptor 2A (247 aa).

Lysine 1 is a topological domain (extracellular). A helical membrane pass occupies residues leucine 2 to leucine 26. The cysteines at positions 3 and 82 are disulfide-linked. Residue aspartate 10 participates in serotonin binding. A DRY motif; important for ligand-induced conformation changes motif is present at residues aspartate 27–tyrosine 29. Topologically, residues aspartate 27 to lysine 46 are cytoplasmic. Residues alanine 47–leucine 70 form a helical membrane-spanning segment. At glutamine 71 to aspartate 87 the chain is on the extracellular side. Residues asparagine 88 to isoleucine 113 form a helical membrane-spanning segment. Residues lysine 114–cysteine 177 lie on the Cytoplasmic side of the membrane. Position 135 is a phosphoserine (serine 135). Residues lysine 178 to isoleucine 203 form a helical membrane-spanning segment. Asparagine 198 contributes to the serotonin binding site. A disulfide bond links cysteine 204 and cysteine 208. Topologically, residues cysteine 204 to aspartate 211 are extracellular. Residues valine 212–leucine 237 form a helical membrane-spanning segment. The NPxxY motif; important for ligand-induced conformation changes and signaling signature appears at asparagine 231–tyrosine 235. Over phenylalanine 238–alanine 247 the chain is Cytoplasmic.

The protein belongs to the G-protein coupled receptor 1 family. Interacts (via C-terminus) with MPDZ and PATJ. May interact (via C-terminus) with MPP3, PRDX6, DLG4, DLG1, CASK, APBA1 and MAGI2. Interacts with GRM2 and DRD2; this may affect signaling. As to expression, detected in adult intestine, especially in mucosal epithelium, longitudinal and circular layers of muscularis externa and myenteric plexuses. Highly expressed in Paneth cells, and detected at lower levels in enterocytes (at protein level).

The protein localises to the cell membrane. It localises to the cell projection. It is found in the dendrite. Its subcellular location is the axon. The protein resides in the cytoplasmic vesicle. The protein localises to the membrane. It localises to the caveola. It is found in the presynapse. With respect to regulation, G-protein coupled receptor activity is regulated by lipids: oleamide increases HTR2A-mediated activity. Its function is as follows. G-protein coupled receptor for 5-hydroxytryptamine (serotonin). Also functions as a receptor for various drugs and psychoactive substances, including mescaline, psilocybin, 1-(2,5-dimethoxy-4-iodophenyl)-2-aminopropane (DOI) and lysergic acid diethylamide (LSD). Ligand binding causes a conformation change that triggers signaling via guanine nucleotide-binding proteins (G proteins) and modulates the activity of downstream effectors. HTR2A is coupled to G(q)/G(11) G alpha proteins and activates phospholipase C-beta, releasing diacylglycerol (DAG) and inositol 1,4,5-trisphosphate (IP3) second messengers that modulate the activity of phosphatidylinositol 3-kinase and promote the release of Ca(2+) ions from intracellular stores, respectively. Beta-arrestin family members inhibit signaling via G proteins and mediate activation of alternative signaling pathways. Affects neural activity, perception, cognition and mood. Plays a role in the regulation of behavior, including responses to anxiogenic situations and psychoactive substances. Plays a role in intestinal smooth muscle contraction, and may play a role in arterial vasoconstriction. The sequence is that of 5-hydroxytryptamine receptor 2A (HTR2A) from Cavia porcellus (Guinea pig).